The chain runs to 280 residues: Chlorophyll a-b binding protein CP26, chloroplastic (280 aa).

The transit peptide at 1–48 (MASLGVSEMLGTPLNFRAVSRSSAPLASSPSTFKTVALFSKKKPAPAK) directs the protein to the chloroplast. Chlorophyll b is bound at residue phenylalanine 70. Tyrosine 95, glutamate 114, and histidine 117 together coordinate chlorophyll a. Helical transmembrane passes span 110–130 (YQAF…GFII) and 167–187 (IPIN…GAEY). Positions 119, 167, 186, and 189 each coordinate chlorophyll b. Residues lysine 224, glutamate 225, asparagine 228, arginine 230, glutamine 242, and histidine 257 each coordinate chlorophyll a. A helical transmembrane segment spans residues 231–251 (LAMFAMLGFFIQAYVTGEGPV).

It belongs to the light-harvesting chlorophyll a/b-binding (LHC) protein family. Forms heterotrimers with LHCB3. The LHC complex consists of chlorophyll a-b binding proteins. It depends on Binds at least 14 chlorophylls (8 Chl-a and 6 Chl-b) and carotenoids such as lutein and neoxanthin. as a cofactor. Post-translationally, photoregulated by reversible phosphorylation of its threonine residues.

It localises to the plastid. The protein resides in the chloroplast thylakoid membrane. Its function is as follows. The light-harvesting complex (LHC) functions as a light receptor, it captures and delivers excitation energy to photosystems with which it is closely associated. In Arabidopsis thaliana (Mouse-ear cress), this protein is Chlorophyll a-b binding protein CP26, chloroplastic (LHCB5).